The sequence spans 474 residues: 3-isopropylmalate dehydratase large subunit (474 aa).

The [4Fe-4S] cluster site is built by Cys353, Cys413, and Cys416.

This sequence belongs to the aconitase/IPM isomerase family. LeuC type 1 subfamily. As to quaternary structure, heterodimer of LeuC and LeuD. Requires [4Fe-4S] cluster as cofactor.

The enzyme catalyses (2R,3S)-3-isopropylmalate = (2S)-2-isopropylmalate. It functions in the pathway amino-acid biosynthesis; L-leucine biosynthesis; L-leucine from 3-methyl-2-oxobutanoate: step 2/4. Catalyzes the isomerization between 2-isopropylmalate and 3-isopropylmalate, via the formation of 2-isopropylmaleate. This chain is 3-isopropylmalate dehydratase large subunit, found in Roseiflexus sp. (strain RS-1).